The following is a 1162-amino-acid chain: Topoisomerase 1-associated factor 1 (1162 aa).

Disordered stretches follow at residues 977–1017 (TEGR…EANA) and 1127–1162 (TQVV…DTEY). Over residues 993–1003 (QRSKGKRKAIA) the composition is skewed to basic residues.

It belongs to the timeless family. Component of the fork protection complex (FPC) consisting of TOF1 and CSM3.

The protein resides in the nucleus. In terms of biological role, forms a fork protection complex (FPC) with CSM3 and which is required for chromosome segregation during meiosis and DNA damage repair. FPC coordinates leading and lagging strand synthesis and moves with the replication fork. FPC stabilizes replication forks in a configuration that is recognized by replication checkpoint sensors. This is Topoisomerase 1-associated factor 1 (TOF1) from Kluyveromyces lactis (strain ATCC 8585 / CBS 2359 / DSM 70799 / NBRC 1267 / NRRL Y-1140 / WM37) (Yeast).